A 419-amino-acid chain; its full sequence is Serine--tRNA ligase (419 aa).

226–228 contributes to the L-serine binding site; that stretch reads TSE. ATP is bound by residues 257-259 and Val273; that span reads RRE. Residue Glu280 coordinates L-serine. 344-347 contacts ATP; the sequence is ELTS. Thr379 is a binding site for L-serine.

It belongs to the class-II aminoacyl-tRNA synthetase family. Type-1 seryl-tRNA synthetase subfamily. As to quaternary structure, homodimer. The tRNA molecule binds across the dimer.

The protein resides in the cytoplasm. It catalyses the reaction tRNA(Ser) + L-serine + ATP = L-seryl-tRNA(Ser) + AMP + diphosphate + H(+). It carries out the reaction tRNA(Sec) + L-serine + ATP = L-seryl-tRNA(Sec) + AMP + diphosphate + H(+). The protein operates within aminoacyl-tRNA biosynthesis; selenocysteinyl-tRNA(Sec) biosynthesis; L-seryl-tRNA(Sec) from L-serine and tRNA(Sec): step 1/1. Catalyzes the attachment of serine to tRNA(Ser). Is also able to aminoacylate tRNA(Sec) with serine, to form the misacylated tRNA L-seryl-tRNA(Sec), which will be further converted into selenocysteinyl-tRNA(Sec). The sequence is that of Serine--tRNA ligase from Mycobacterium tuberculosis (strain CDC 1551 / Oshkosh).